Consider the following 400-residue polypeptide: Nicotinate phosphoribosyltransferase (400 aa).

Histidine 220 is modified (phosphohistidine; by autocatalysis).

Belongs to the NAPRTase family. Transiently phosphorylated on a His residue during the reaction cycle. Phosphorylation strongly increases the affinity for substrates and increases the rate of nicotinate D-ribonucleotide production. Dephosphorylation regenerates the low-affinity form of the enzyme, leading to product release.

The catalysed reaction is nicotinate + 5-phospho-alpha-D-ribose 1-diphosphate + ATP + H2O = nicotinate beta-D-ribonucleotide + ADP + phosphate + diphosphate. It participates in cofactor biosynthesis; NAD(+) biosynthesis; nicotinate D-ribonucleotide from nicotinate: step 1/1. Catalyzes the synthesis of beta-nicotinate D-ribonucleotide from nicotinate and 5-phospho-D-ribose 1-phosphate at the expense of ATP. The polypeptide is Nicotinate phosphoribosyltransferase (Salmonella choleraesuis (strain SC-B67)).